The primary structure comprises 542 residues: Malolactic enzyme (542 aa).

Tyrosine 92 serves as the catalytic Proton donor. Lysine 165 acts as the Proton acceptor in catalysis. Lysine 165 serves as a coordination point for substrate. Mn(2+) is bound by residues glutamate 236, aspartate 237, and aspartate 260. NAD(+) contacts are provided by residues 293 to 296, asparagine 405, and asparagine 450; that span reads AGTA. A substrate-binding site is contributed by asparagine 450.

The protein belongs to the malic enzymes family. As to quaternary structure, homodimer. Mn(2+) is required as a cofactor. NAD(+) serves as cofactor.

The catalysed reaction is (S)-malate + H(+) = (S)-lactate + CO2. Its activity is regulated as follows. Oxamate, fructose-1,6-diphosphate and L-lactate act as non-competitive inhibitors, whereas succinate, citrate and tartrate isomers produce a competitive inhibition. In terms of biological role, involved in the malolactic fermentation (MLF) of wine, which results in a natural decrease in acidity and favorable changes in wine flavors. Catalyzes the decarboxylation of L-malate to L-lactate. The chain is Malolactic enzyme (mleS) from Leuconostoc mesenteroides.